Consider the following 279-residue polypeptide: Elongation factor Ts (279 aa).

Residues 80–83 are involved in Mg(2+) ion dislocation from EF-Tu; it reads TDFV.

The protein belongs to the EF-Ts family.

The protein localises to the cytoplasm. Its function is as follows. Associates with the EF-Tu.GDP complex and induces the exchange of GDP to GTP. It remains bound to the aminoacyl-tRNA.EF-Tu.GTP complex up to the GTP hydrolysis stage on the ribosome. This Borrelia garinii subsp. bavariensis (strain ATCC BAA-2496 / DSM 23469 / PBi) (Borreliella bavariensis) protein is Elongation factor Ts.